Consider the following 118-residue polypeptide: Membrane-anchored ubiquitin-fold protein 3 (118 aa).

The 67-residue stretch at 7–73 folds into the Ubiquitin-like domain; the sequence is IDIKFRLYDG…LENNKTVGQC (67 aa). The S-palmitoyl cysteine moiety is linked to residue cysteine 113. Cysteine 115 carries the cysteine methyl ester modification. The S-geranylgeranyl cysteine moiety is linked to residue cysteine 115. Residues 116–118 constitute a propeptide, removed in mature form; that stretch reads TIL.

In terms of tissue distribution, ubiquitous, but three fold higher expression in senescing leaves.

The protein localises to the cell membrane. Functionally, may serve as docking site to facilitate the association of other proteins to the plasma membrane. This Arabidopsis thaliana (Mouse-ear cress) protein is Membrane-anchored ubiquitin-fold protein 3 (MUB3).